We begin with the raw amino-acid sequence, 315 residues long: Oxalate oxidoreductase subunit delta (315 aa).

4Fe-4S ferredoxin-type domains are found at residues 252 to 280 (QRPI…TRTE) and 281 to 310 (EGPV…NVPE). Residues Cys261, Cys264, Cys267, Cys271, Cys290, Cys293, Cys296, and Cys300 each coordinate [4Fe-4S] cluster.

As to quaternary structure, dimer of heterotrimer of one alpha, one beta and one delta subunit. The cofactor is [4Fe-4S] cluster.

The enzyme catalyses oxidized 2[4Fe-4S]-[ferredoxin] + oxalate = reduced 2[4Fe-4S]-[ferredoxin] + 2 CO2. Functionally, catalyzes the anaerobic oxidation of oxalate using a broad range of electron acceptors, including ferredoxin and the nickel-dependent carbon monoxide dehydrogenase. Does not require coenzyme A as cosubstrate. Enables anaerobic growth on oxalate which is used as energy source by the bacteria. In Moorella thermoacetica (strain ATCC 39073 / JCM 9320), this protein is Oxalate oxidoreductase subunit delta.